The chain runs to 368 residues: N-acetylneuraminate epimerase (368 aa).

The N-terminal stretch at 1 to 19 is a signal peptide; it reads MNKTITALAIIMASFAANA. Kelch repeat units follow at residues 40 to 84, 86 to 137, 139 to 173, 174 to 219, 222 to 265, 287 to 336, and 338 to 367; these read TVYI…AFID, NLYV…FVHN, KAYV…KINA, YYFD…VNKG, TWLI…VAGG, ENYQ…PWNN, and LLII…VTVQ. Glu-228 acts as the Proton acceptor in catalysis.

This sequence belongs to the NanM family. Homodimer.

It localises to the periplasm. It catalyses the reaction N-acetyl-alpha-neuraminate = N-acetyl-beta-neuraminate. Its function is as follows. Converts alpha-N-acetylneuranimic acid (Neu5Ac) to the beta-anomer, accelerating the equilibrium between the alpha- and beta-anomers. Probably facilitates sialidase-negative bacteria to compete successfully for limited amounts of extracellular Neu5Ac, which is likely taken up in the beta-anomer. In addition, the rapid removal of sialic acid from solution might be advantageous to the bacterium to damp down host responses. This is N-acetylneuraminate epimerase from Escherichia coli O139:H28 (strain E24377A / ETEC).